Consider the following 136-residue polypeptide: Small cardioactive peptides (136 aa).

The signal sequence occupies residues 1-24 (METSVSRVTVSLTLLVLIICSADA). Methionine amide is present on residues methionine 33 and methionine 46. The propeptide at 49 to 135 (SQMKTETGTD…VLSKLKSLLQ (87 aa)) is carboxy-terminal peptide.

It belongs to the SCP family. Contains three disulfide bonds. Highly expressed in the buccal ganglion.

It localises to the secreted. In terms of biological role, involved in the stimulation of contractile activity in the gut, the increase of the amplitude of the heart beat, and enhancement of the contractile response of the radula closer muscle. This Aplysia californica (California sea hare) protein is Small cardioactive peptides.